The chain runs to 303 residues: Glycine--tRNA ligase alpha subunit (303 aa).

Belongs to the class-II aminoacyl-tRNA synthetase family. Tetramer of two alpha and two beta subunits.

It localises to the cytoplasm. The enzyme catalyses tRNA(Gly) + glycine + ATP = glycyl-tRNA(Gly) + AMP + diphosphate. This is Glycine--tRNA ligase alpha subunit from Klebsiella pneumoniae subsp. pneumoniae (strain ATCC 700721 / MGH 78578).